The chain runs to 290 residues: 33 kDa chaperonin (290 aa).

2 disulfide bridges follow: C235/C237 and C268/C271.

Belongs to the HSP33 family. In terms of processing, under oxidizing conditions two disulfide bonds are formed involving the reactive cysteines. Under reducing conditions zinc is bound to the reactive cysteines and the protein is inactive.

The protein resides in the cytoplasm. In terms of biological role, redox regulated molecular chaperone. Protects both thermally unfolding and oxidatively damaged proteins from irreversible aggregation. Plays an important role in the bacterial defense system toward oxidative stress. The sequence is that of 33 kDa chaperonin from Streptococcus pneumoniae (strain CGSP14).